The following is a 177-amino-acid chain: Transcription antitermination protein NusB (177 aa).

Residues 1–36 form a disordered region; the sequence is MTEQPTKPTGSRPPRQPRTGLTSTGARKAGSKSDRS.

Belongs to the NusB family.

Involved in transcription antitermination. Required for transcription of ribosomal RNA (rRNA) genes. Binds specifically to the boxA antiterminator sequence of the ribosomal RNA (rrn) operons. The sequence is that of Transcription antitermination protein NusB from Albidiferax ferrireducens (strain ATCC BAA-621 / DSM 15236 / T118) (Rhodoferax ferrireducens).